Reading from the N-terminus, the 365-residue chain is UDP-N-acetylglucosamine--N-acetylmuramyl-(pentapeptide) pyrophosphoryl-undecaprenol N-acetylglucosamine transferase (365 aa).

UDP-N-acetyl-alpha-D-glucosamine-binding positions include 10–12 (TGG), Asn-124, Arg-165, Ser-193, Ile-248, and Gln-293.

It belongs to the glycosyltransferase 28 family. MurG subfamily.

The protein resides in the cell inner membrane. The catalysed reaction is di-trans,octa-cis-undecaprenyl diphospho-N-acetyl-alpha-D-muramoyl-L-alanyl-D-glutamyl-meso-2,6-diaminopimeloyl-D-alanyl-D-alanine + UDP-N-acetyl-alpha-D-glucosamine = di-trans,octa-cis-undecaprenyl diphospho-[N-acetyl-alpha-D-glucosaminyl-(1-&gt;4)]-N-acetyl-alpha-D-muramoyl-L-alanyl-D-glutamyl-meso-2,6-diaminopimeloyl-D-alanyl-D-alanine + UDP + H(+). The protein operates within cell wall biogenesis; peptidoglycan biosynthesis. In terms of biological role, cell wall formation. Catalyzes the transfer of a GlcNAc subunit on undecaprenyl-pyrophosphoryl-MurNAc-pentapeptide (lipid intermediate I) to form undecaprenyl-pyrophosphoryl-MurNAc-(pentapeptide)GlcNAc (lipid intermediate II). This Geotalea uraniireducens (strain Rf4) (Geobacter uraniireducens) protein is UDP-N-acetylglucosamine--N-acetylmuramyl-(pentapeptide) pyrophosphoryl-undecaprenol N-acetylglucosamine transferase.